Reading from the N-terminus, the 879-residue chain is MANVQEDKDFHGRWPDRTLQPCLKDYKALLESYQNWSAARFVTADIDELVHHRATFFDQLISQLWQQFQLEDEPASILAVGGYGRETLHPGSDIDLLILVGPENAEAEAKLSEKLGQFVTFLWDLHLDIGHSVRTIEDCFAQSENDITIATNLIESRYLSGAESLYNEFHQQLLNDFPWSSRDFYQAKLDEQKQRHQQYHSTSYNLEPNIKSSPGGLRDIQTVGWIAKRHFRTHSDENLVEYGYMTADEFVELRDCMNWLWRIRFALHLEAGKREDRLLFDFQPGVAVRLGYGNDGKASVETMMKDYFKVVLRVSELNQMLLQFFHQAILGTQDLQHAEHISDDFAVANKLLTARHDNVFDNHCNIIRAFVCIAEHPQIQGIHSNTIRLLRNARAQLSEPLSHDPECRDLFNQLIQHPRGCGLSFALMHHHSVLASYLSQWQQIVGQMQFDLFHAYTVDEHTFRLVRNLYRFSDEDYQDQFPLCEKLVAQMDRRYCLYLAGIFHDIAKGRGGDHSELGEMDARNFCHQHGYSEEDAELVAWLVRHHLTMSVTAQKRDIHDPEVIQDFANQVSTPERLDYLYCLTVADIRATNQSLWNNWKATLLEELYNATSYLLQQDSNKPTLDIRQKINENKASAMALLLSAGFEKAEILALWGRFTADYFFRHTAEQISWHSQHILNLPSEQLPLILIGDENNYGTTELFIYHHEEGHLFASVAGVLDSQQLNILDAQILATRDGFVMDTFVVLQRDGKPLTEPHRIEEVKQQLLDVLHKRIPVPSTKRPLSRRMKNFSVATEVTFIPSKHHGRTTFELVTLDRPGLIAKLAAILQQQNVILLAAKITTIGEQAEDLFIVTTEQQTALSDKQKKTLKAKIIKDLEF.

The interval Met-1 to His-340 is uridylyltransferase. The interval Ile-341 to Thr-700 is uridylyl-removing. Residues Val-458–Leu-580 enclose the HD domain. ACT domains are found at residues Glu-701–Arg-782 and Thr-809–Phe-879.

Belongs to the GlnD family. Mg(2+) serves as cofactor.

It carries out the reaction [protein-PII]-L-tyrosine + UTP = [protein-PII]-uridylyl-L-tyrosine + diphosphate. The catalysed reaction is [protein-PII]-uridylyl-L-tyrosine + H2O = [protein-PII]-L-tyrosine + UMP + H(+). With respect to regulation, uridylyltransferase (UTase) activity is inhibited by glutamine, while glutamine activates uridylyl-removing (UR) activity. In terms of biological role, modifies, by uridylylation and deuridylylation, the PII regulatory proteins (GlnB and homologs), in response to the nitrogen status of the cell that GlnD senses through the glutamine level. Under low glutamine levels, catalyzes the conversion of the PII proteins and UTP to PII-UMP and PPi, while under higher glutamine levels, GlnD hydrolyzes PII-UMP to PII and UMP (deuridylylation). Thus, controls uridylylation state and activity of the PII proteins, and plays an important role in the regulation of nitrogen assimilation and metabolism. The protein is Bifunctional uridylyltransferase/uridylyl-removing enzyme of Idiomarina loihiensis (strain ATCC BAA-735 / DSM 15497 / L2-TR).